A 434-amino-acid chain; its full sequence is Rubisco accumulation factor 1.1, chloroplastic (434 aa).

A chloroplast-targeting transit peptide spans 1–51 (MLSLTATTLSSSIFTQSKTHGFFNTRPVYRKPFTTITSALIPASNRQAPPK). Residues 65–254 (IPPKFRSLDT…KAKKAVLREL (190 aa)) form an N-terminal alpha-helix region. The tract at residues 273 to 419 (VPVVRLRFGE…GMVVLVVRPP (147 aa)) is C-terminal beta sheet.

This sequence belongs to the RAF family. Homodimer.

It localises to the plastid. Its subcellular location is the chloroplast. In terms of biological role, required for assembly or stability of RuBisCO. Acts at a postchaperonin step to fold and/or assemble the large subunit (rbcL) into RuBisCO. RAF1 binds first to a rbcL dimer (rbcL(2)), leading to a rbcL(8)-RAF1(4) complex formation. In the next step, RBCS displaces RAF1, thus resulting in holoenzyme formation. This is Rubisco accumulation factor 1.1, chloroplastic from Arabidopsis thaliana (Mouse-ear cress).